The following is a 398-amino-acid chain: Odorant receptor 59b (398 aa).

Residues 1–46 lie on the Cytoplasmic side of the membrane; sequence MAVFKLIKPAPLTEKVQSRQGNIYLYRAMWLIGWIPPKEGVLRYVY. The helical transmembrane segment at 47 to 67 threads the bilayer; sequence LFWTCVPFAFGVFYLPVGFII. The Extracellular portion of the chain corresponds to 68–84; that stretch reads SYVQEFKNFTPGEFLTS. A helical membrane pass occupies residues 85–105; sequence LQVCINVYGASVKSTITYLFL. The Cytoplasmic segment spans residues 106–141; that stretch reads WRLRKTEILLDSLDKRLANDSDRERIHNMVARCNYA. Residues 142-162 traverse the membrane as a helical segment; that stretch reads FLIYSFIYCGYAGSTFLSYAL. Over 163–179 the chain is Extracellular; the sequence is SGRPPWSVYNPFIDWRD. A helical membrane pass occupies residues 180–200; it reads GMGSLWIQAIFEYITMSFAVL. Residues 201–269 are Cytoplasmic-facing; sequence QDQLSDTYPL…DMIRPMISRT (69 aa). Residues 270–290 form a helical membrane-spanning segment; that stretch reads IFVQFALIGSVLGLTLVNVFF. Residues 291-293 lie on the Extracellular side of the membrane; sequence FSN. Residues 294–314 form a helical membrane-spanning segment; sequence FWKGVASLLFVITILLQTFPF. The Cytoplasmic portion of the chain corresponds to 315–348; it reads CYTCNMLIDDAQDLSNEIFQSNWVDAEPRYKATL. Residues 349 to 369 form a helical membrane-spanning segment; it reads VLFMHHVQQPIIFIAGGIFPI. Residues 370-398 are Extracellular-facing; the sequence is SMNSNITVAKFAFSIITIVRQMNLAEQFQ. N374 carries N-linked (GlcNAc...) asparagine glycosylation.

It belongs to the insect chemoreceptor superfamily. Heteromeric odorant receptor channel (TC 1.A.69) family. Or2a subfamily. Interacts with Orco. Complexes exist early in the endomembrane system in olfactory sensory neurons (OSNs), coupling these complexes to the conserved ciliary trafficking pathway. Expressed in olfactory sensory neurons in the antenna.

Its subcellular location is the cell membrane. Functionally, odorant receptor which mediates acceptance or avoidance behavior, depending on its substrates. The odorant receptor repertoire encodes a large collection of odor stimuli that vary widely in identity, intensity, and duration. Forms a complex with Orco to form odorant-sensing units, providing sensitive and prolonged odorant signaling and calcium permeability. Also plays a role in the response to N,N-Diethyl-meta-toluamide (DEET), the most widely used insect repellent worldwide. This Drosophila melanogaster (Fruit fly) protein is Odorant receptor 59b (Or59b).